We begin with the raw amino-acid sequence, 908 residues long: Translation initiation factor IF-2 (908 aa).

Residues 52 to 318 (QSHGQEEKRR…RSSQSSQHKF (267 aa)) form a disordered region. Residues 65–84 (KSKTTSTARVTGSSGKSKSV) show a composition bias toward polar residues. 6 stretches are compositionally biased toward basic and acidic residues: residues 94 to 108 (FEKPDPEKMAEELAA), 120 to 138 (AAKDAEDRAATKKKSEERQ), 176 to 185 (IEVKPKDQPK), 193 to 238 (PKVE…EQMR), 270 to 280 (SFEKERREIKR), and 294 to 303 (KNQDEREIKN). The tr-type G domain maps to 409 to 578 (TRPPVVTIMG…SLQAELMELE (170 aa)). The segment at 418-425 (GHVDHGKT) is G1. 418–425 (GHVDHGKT) contributes to the GTP binding site. The segment at 443-447 (GITQH) is G2. Residues 464–467 (DTPG) form a G3 region. GTP-binding positions include 464-468 (DTPGH) and 518-521 (NKMD). The G4 stretch occupies residues 518–521 (NKMD). Positions 554 to 556 (SAK) are G5.

Belongs to the TRAFAC class translation factor GTPase superfamily. Classic translation factor GTPase family. IF-2 subfamily.

The protein resides in the cytoplasm. One of the essential components for the initiation of protein synthesis. Protects formylmethionyl-tRNA from spontaneous hydrolysis and promotes its binding to the 30S ribosomal subunits. Also involved in the hydrolysis of GTP during the formation of the 70S ribosomal complex. The chain is Translation initiation factor IF-2 from Psychrobacter cryohalolentis (strain ATCC BAA-1226 / DSM 17306 / VKM B-2378 / K5).